A 1644-amino-acid polypeptide reads, in one-letter code: Kinesin-like protein unc-104 (1644 aa).

The Kinesin motor domain occupies 3-351 (SVKVAVRVRP…LRYADRAKQI (349 aa)). 97-104 (GQTGAGKS) lines the ATP pocket. Residues 358–436 (NEDANAKLIR…IAELNETWEE (79 aa)) adopt a coiled-coil conformation. Positions 499–565 (TRLGTSEANV…LQTGSRVILG (67 aa)) constitute an FHA domain. The segment covering 574-591 (HPEQAREKREKPKDKDVG) has biased composition (basic and acidic residues). A disordered region spans residues 574 to 598 (HPEQAREKREKPKDKDVGENPGGNA). Residues 631 to 672 (EQFKREKLAADQEFEEQRKTYEARIDALQKQVEEQSMTMSMY) are a coiled coil. 2 disordered regions span residues 953–985 (EQEDADSGRGDSSVASELHESNEHEPGEHLQPG) and 1419–1440 (HMVIPPSPQTPVKDQQTPTLPE). Residues 969-984 (ELHESNEHEPGEHLQP) show a composition bias toward basic and acidic residues. Polar residues predominate over residues 1428–1437 (TPVKDQQTPT). The 99-residue stretch at 1542 to 1640 (VVARKGYLNV…WLYAINPLLA (99 aa)) folds into the PH domain.

The protein belongs to the TRAFAC class myosin-kinesin ATPase superfamily. Kinesin family. Unc-104 subfamily. As to quaternary structure, monomer.

It localises to the cytoplasm. It is found in the cytoskeleton. Its function is as follows. Required for presynaptic maturation, has a role in axonal transport of dense-core vesicles carrying synaptic vesicle precursors, components required for the morphological transformation of axonal growth cones to mature boutons. The protein is Kinesin-like protein unc-104 of Aedes aegypti (Yellowfever mosquito).